The primary structure comprises 427 residues: Actin-related protein 3 (427 aa).

This sequence belongs to the actin family. ARP3 subfamily. Component of the Arp2/3 complex composed of arp2, act2, arc1/p41-ARC, arc2/p34-ARC, arc3/p21-ARC, arc4/p20-ARC and arc5/p16-ARC.

It localises to the cytoplasm. The protein resides in the cytoskeleton. Its subcellular location is the actin patch. Functionally, functions as ATP-binding component of the Arp2/3 complex which is involved in regulation of actin polymerization and together with an activating nucleation-promoting factor (NPF) mediates the formation of branched actin networks. Seems to contact the pointed end of the daughter actin filament. May be involved in cytokinesis. In Schizosaccharomyces pombe (strain 972 / ATCC 24843) (Fission yeast), this protein is Actin-related protein 3 (act2).